Here is a 572-residue protein sequence, read N- to C-terminus: MRTSQYLLSTLKETPADAEVISHQLMLRAGMIRKLASGLYTWLPTGVRVLKKVENIVREEMNNAGAIEVSMPVVQPADLWQESGRWEQYGPELLRFVDRGERPFVLGPTHEEVITDLIRNELSSYKQLPLNFYQIQTKFRDEVRPRFGVMRSREFLMKDAYSFHTSQESLQETYDAMYAAYSKIFSRMGLDFRAVQADTGSIGGSASHEFQVLAQSGEDDVVFSDTSDYAANIELAEAIAPKEPRAAATQEMTLVDTPNAKTIAELVEQFNLPIEKTVKTLLVKAVEGSSFPLVALLVRGDHELNEVKAEKLPQVASPLTFATEEEIRAVVKAGPGSLGPVNMPIPVVIDRTVAAMSDFAAGANIDGKHYFGINWDRDVATPEIADIRNVVAGDPSPDGQGTLLIKRGIEVGHIFQLGTKYSEALKASVQGEDGRNQILTMGCYGIGVTRVVAAAIEQNYDERGIVWPDAIAPFQVAILPMNMHKSFRVQELAEKLYSELRAQGIEVLLDDRKERPGVMFADMELIGIPHTIVLGDRNLDNDDIEYKYRRNGEKQLIKTGDIVDYLVKQIKG.

This sequence belongs to the class-II aminoacyl-tRNA synthetase family. ProS type 1 subfamily. As to quaternary structure, homodimer.

Its subcellular location is the cytoplasm. It carries out the reaction tRNA(Pro) + L-proline + ATP = L-prolyl-tRNA(Pro) + AMP + diphosphate. Its function is as follows. Catalyzes the attachment of proline to tRNA(Pro) in a two-step reaction: proline is first activated by ATP to form Pro-AMP and then transferred to the acceptor end of tRNA(Pro). As ProRS can inadvertently accommodate and process non-cognate amino acids such as alanine and cysteine, to avoid such errors it has two additional distinct editing activities against alanine. One activity is designated as 'pretransfer' editing and involves the tRNA(Pro)-independent hydrolysis of activated Ala-AMP. The other activity is designated 'posttransfer' editing and involves deacylation of mischarged Ala-tRNA(Pro). The misacylated Cys-tRNA(Pro) is not edited by ProRS. The polypeptide is Proline--tRNA ligase (Escherichia coli O17:K52:H18 (strain UMN026 / ExPEC)).